Reading from the N-terminus, the 466-residue chain is 23S rRNA (uracil(1939)-C(5))-methyltransferase RlmD (466 aa).

One can recognise a TRAM domain in the interval 1 to 54 (MVDVLNIESLDLEARGIAHRDGKVLFVEGALPGERVTVQTVRRKPSYEIAKVEE). [4Fe-4S] cluster contacts are provided by Cys-67, Cys-73, Cys-76, and Cys-155. Positions 264, 293, 298, 314, 342, and 363 each coordinate S-adenosyl-L-methionine. The active-site Nucleophile is Cys-393.

Belongs to the class I-like SAM-binding methyltransferase superfamily. RNA M5U methyltransferase family. RlmD subfamily.

The enzyme catalyses uridine(1939) in 23S rRNA + S-adenosyl-L-methionine = 5-methyluridine(1939) in 23S rRNA + S-adenosyl-L-homocysteine + H(+). Its function is as follows. Catalyzes the formation of 5-methyl-uridine at position 1939 (m5U1939) in 23S rRNA. The polypeptide is 23S rRNA (uracil(1939)-C(5))-methyltransferase RlmD (Bordetella bronchiseptica (strain ATCC BAA-588 / NCTC 13252 / RB50) (Alcaligenes bronchisepticus)).